Reading from the N-terminus, the 404-residue chain is Cytoplasmic tRNA 2-thiolation protein 2 (404 aa).

This sequence belongs to the CTU2/NCS2 family.

It is found in the cytoplasm. The protein operates within tRNA modification; 5-methoxycarbonylmethyl-2-thiouridine-tRNA biosynthesis. Functionally, plays a central role in 2-thiolation of mcm(5)S(2)U at tRNA wobble positions of tRNA(Lys), tRNA(Glu) and tRNA(Gln). May act by forming a heterodimer with NCS6/CTU1 that ligates sulfur from thiocarboxylated URM1 onto the uridine of tRNAs at wobble position. This Drosophila erecta (Fruit fly) protein is Cytoplasmic tRNA 2-thiolation protein 2.